Reading from the N-terminus, the 307-residue chain is Transcription factor DIVARICATA (307 aa).

Residues 21 to 74 (RSTTRWTAAENKAFENALAVFDENTPNRWERVAERVPGKTVGDVMRQYKELEDD) enclose the SANT domain. The disordered stretch occupies residues 109 to 133 (QSYGTGGRKSSSGRPSEQERKKGVP). Residues 124 to 133 (SEQERKKGVP) show a composition bias toward basic and acidic residues. In terms of domain architecture, HTH myb-type spans 126-182 (QERKKGVPWTEEEHKLFLMGLKKYGKGDWRNISRNFVITRTPTQVASHAQKYFIRQL). The H-T-H motif DNA-binding region spans 154–178 (WRNISRNFVITRTPTQVASHAQKYF). 2 stretches are compositionally biased toward polar residues: residues 196 to 206 (ITTVNLSDNQT) and 222 to 231 (MAQQQTSSTS). The disordered stretch occupies residues 196–231 (ITTVNLSDNQTPSPDNKKPPSSPDHSMAQQQTSSTS).

The protein localises to the nucleus. Its function is as follows. Involved in the dorsovental asymmetry of flowers. Promotes ventral identity. The chain is Transcription factor DIVARICATA (DIVARICATA) from Antirrhinum majus (Garden snapdragon).